Reading from the N-terminus, the 103-residue chain is Alkanal monooxygenase alpha chain (103 aa).

In terms of assembly, heterodimer of an alpha and a beta chain.

The catalysed reaction is a long-chain fatty aldehyde + FMNH2 + O2 = a long-chain fatty acid + hnu + FMN + H2O + 2 H(+). Its function is as follows. Light-emitting reaction in luminous bacteria. The sequence is that of Alkanal monooxygenase alpha chain (luxA) from Vibrio cholerae.